The sequence spans 160 residues: SsrA-binding protein (160 aa).

The tract at residues 133–160 (KKLHDKRETEKERDWNRQKSRLLKGNSQ) is disordered. Residues 137–149 (DKRETEKERDWNR) show a composition bias toward basic and acidic residues.

The protein belongs to the SmpB family.

The protein resides in the cytoplasm. Required for rescue of stalled ribosomes mediated by trans-translation. Binds to transfer-messenger RNA (tmRNA), required for stable association of tmRNA with ribosomes. tmRNA and SmpB together mimic tRNA shape, replacing the anticodon stem-loop with SmpB. tmRNA is encoded by the ssrA gene; the 2 termini fold to resemble tRNA(Ala) and it encodes a 'tag peptide', a short internal open reading frame. During trans-translation Ala-aminoacylated tmRNA acts like a tRNA, entering the A-site of stalled ribosomes, displacing the stalled mRNA. The ribosome then switches to translate the ORF on the tmRNA; the nascent peptide is terminated with the 'tag peptide' encoded by the tmRNA and targeted for degradation. The ribosome is freed to recommence translation, which seems to be the essential function of trans-translation. The sequence is that of SsrA-binding protein from Agrobacterium fabrum (strain C58 / ATCC 33970) (Agrobacterium tumefaciens (strain C58)).